A 593-amino-acid chain; its full sequence is Solute carrier family 13 member 2 (593 aa).

4 consecutive transmembrane segments (helical) span residues 11 to 31, 53 to 73, 86 to 106, and 121 to 141; these read YRMYLLVFLLPISLLPLPILV, ALPLAVTALLPLCLFPMMGIM, TNVLFIGGLLLAIAVEHWNLH, and PALLILGFMVVTAFLSMWISN. The segment covering 164-184 has biased composition (polar residues); sequence SNVEEGSDNPTFELQEPSPQK. The segment at 164–204 is disordered; it reads SNVEEGSDNPTFELQEPSPQKETSKVDEKDNGQAQPLPAVP. Over residues 185 to 194 the composition is skewed to basic and acidic residues; it reads ETSKVDEKDN. The next 8 membrane-spanning stretches (helical) occupy residues 221–241, 270–290, 327–347, 369–389, 451–471, 485–505, 514–534, and 543–563; these read GMSLCVCYSASIGGIATLTGT, FAFPIMVILLLLSWLWLQILF, PMSFAEKAVFILFVILVLLWF, VMVSDGSASILIGVFLFMVPS, LMPLQHVPPPATVFIICLLVA, LLLPILASMAQAICLHPLYVM, LAFMLPVATPPNAIVFSFGGL, and GIMLNIIGVLVIMLAINSWGV.

This sequence belongs to the SLC13A/DASS transporter (TC 2.A.47) family. NADC subfamily. In terms of tissue distribution, abundant in kidney and small intestine.

It localises to the apical cell membrane. It carries out the reaction succinate(out) + 3 Na(+)(out) = succinate(in) + 3 Na(+)(in). The enzyme catalyses fumarate(out) + 3 Na(+)(out) = fumarate(in) + 3 Na(+)(in). The catalysed reaction is 2-oxoglutarate(out) + 3 Na(+)(out) = 2-oxoglutarate(in) + 3 Na(+)(in). Its activity is regulated as follows. Li(+) decreases succinate transport in the presence of Na(+), by competing at one of the three cation binding sites. Low-affinity sodium-dicarboxylate cotransporter, that mediates the entry of citric acid cycle intermediates, such as succinate, citrate, fumarate and alpha-ketoglutarate (2-oxoglutarate) into the small intestine and renal proximal tubule. Transports the dicarboxylate into the cell with a probable stoichiometry of 3 Na(+) for 1 divalent dicarboxylate, rendering the process electrogenic. Citrate is transported in protonated form as a divalent anion, rather than the trivalent form which is normally found in blood. Has a critical role in renal dicarboxylate transport. The polypeptide is Solute carrier family 13 member 2 (SLC13A2) (Oryctolagus cuniculus (Rabbit)).